The chain runs to 456 residues: Trigger factor (456 aa).

The PPIase FKBP-type domain maps to 192–277 (GDTVVIDFVG…IHEVKTKEVP (86 aa)).

It belongs to the FKBP-type PPIase family. Tig subfamily.

The protein localises to the cytoplasm. It carries out the reaction [protein]-peptidylproline (omega=180) = [protein]-peptidylproline (omega=0). Functionally, involved in protein export. Acts as a chaperone by maintaining the newly synthesized protein in an open conformation. Functions as a peptidyl-prolyl cis-trans isomerase. The polypeptide is Trigger factor (Streptococcus pyogenes serotype M2 (strain MGAS10270)).